Reading from the N-terminus, the 103-residue chain is Small ribosomal subunit protein uS10 (103 aa).

This sequence belongs to the universal ribosomal protein uS10 family. As to quaternary structure, part of the 30S ribosomal subunit.

Functionally, involved in the binding of tRNA to the ribosomes. The polypeptide is Small ribosomal subunit protein uS10 (Azoarcus sp. (strain BH72)).